The sequence spans 386 residues: Prostatic acid phosphatase (386 aa).

A signal peptide spans 1–32; that stretch reads MRAAPLLLARAASLSLGFLFLLFFWLDRSVLA. Substrate is bound at residue Arg43. Residue His44 is the Nucleophile of the active site. Arg47 contacts substrate. N-linked (GlcNAc...) asparagine glycosylation is present at Asn94. Residue Arg111 coordinates substrate. Cystine bridges form between Cys161–Cys372, Cys215–Cys313, and Cys347–Cys351. The N-linked (GlcNAc...) asparagine glycan is linked to Asn220. Substrate is bound at residue His289. Asp290 functions as the Proton donor in the catalytic mechanism. N-linked (GlcNAc...) asparagine glycosylation occurs at Asn333.

The protein belongs to the histidine acid phosphatase family. Homodimer; dimer formation is required for phosphatase activity. In terms of processing, N-glycosylated. High mannose content, partially sialylated and fucosylated biantennary complex. Also fucosylated with partially sialylated triantennary complex oligosaccharides. Post-translationally, proteolytically cleaved in seminal fluid to produce several peptides. Peptide PAPf39, the most prominent, forms amyloid beta-sheet fibrils, SEVI (semen-derived enhancer of viral infection). In terms of tissue distribution, highly expressed in the prostate, restricted to glandular and ductal epithelial cells. Also expressed in bladder, kidney, pancreas, lung, cervix, testis and ovary. Weak expression in a subset of pancreatic islet cells, squamous epithelia, the pilosebaceous unit, colonic neuroendocrine cells and skin adnexal structures. Low expression in prostate carcinoma cells and tissues. Widely expressed. Expressed in the sarcolemma of skeletal muscle.

Its subcellular location is the secreted. It is found in the cell membrane. It localises to the lysosome membrane. The protein localises to the nucleus. The protein resides in the cytoplasm. Its subcellular location is the cytosol. The catalysed reaction is a phosphate monoester + H2O = an alcohol + phosphate. It carries out the reaction 1-(9Z-octadecenoyl)-sn-glycero-3-phosphate + H2O = 1-(9Z-octadecenoyl)-sn-glycerol + phosphate. It catalyses the reaction a ribonucleoside 5'-phosphate + H2O = a ribonucleoside + phosphate. The enzyme catalyses O-phospho-L-tyrosyl-[protein] + H2O = L-tyrosyl-[protein] + phosphate. Phosphatase activity inhibited by L(+)-tartrate, and by its derivative, alpha-benzylaminobenzylphosphonic acid. In terms of biological role, a non-specific tyrosine phosphatase that dephosphorylates a diverse number of substrates under acidic conditions (pH 4-6) including alkyl, aryl, and acyl orthophosphate monoesters and phosphorylated proteins. Has lipid phosphatase activity and inactivates lysophosphatidic acid in seminal plasma. Its function is as follows. Tyrosine phosphatase that acts as a tumor suppressor of prostate cancer through dephosphorylation of ERBB2 and deactivation of MAPK-mediated signaling. In addition to its tyrosine phosphatase activity has ecto-5'-nucleotidase activity in dorsal root ganglion (DRG) neurons. Generates adenosine from AMP which acts as a pain suppressor. (Microbial infection) Forms amyloid beta-sheet fibrils in semen. These fibrils, termed SEVI (semen-derived enhancer of viral infection) capture HIV virions, attach them to target cells and enhance infection. SEVI amyloid fibrils are degraded by polyphenol epigallocatechin-3-gallate (EGCG), a constituent of green tea. Target cell attachment and enhancement of HIV infection is inhibited by surfen. Also similarly boosts XMRV (xenotropic murine leukemia virus-related virus) infection. In Homo sapiens (Human), this protein is Prostatic acid phosphatase.